We begin with the raw amino-acid sequence, 514 residues long: Maturase K (514 aa).

It belongs to the intron maturase 2 family. MatK subfamily.

The protein resides in the plastid. The protein localises to the chloroplast. Usually encoded in the trnK tRNA gene intron. Probably assists in splicing its own and other chloroplast group II introns. The protein is Maturase K of Phoenix dactylifera (Date palm).